Reading from the N-terminus, the 915-residue chain is DNA repair-scaffolding protein (915 aa).

A compositionally biased stretch (basic residues) spans 1–15; that stretch reads MPRGSRARGSKRKRS. 2 disordered regions span residues 1–30 and 56–114; these read MPRG…RPLQ and FQNT…EDKT. Over residues 56-65 the composition is skewed to polar residues; it reads FQNTSGNPSL. The span at 67–85 shows a compositional bias: basic and acidic residues; sequence AEEKTITEKHLELCPRPKQ. The segment covering 86-107 has biased composition (polar residues); sequence ETTTSKSTSGLTDITWSSSGSD. A necessary for interaction with RAD51 region spans residues 151-450; that stretch reads EISDCASCAS…GTAWTHGHKE (300 aa).

As to quaternary structure, found in a complex, at least composed of BLM, RAD51 and SPIDR; the complex formation is mediated by SPIDR. Interacts (via C-terminal region) with BLM; the interaction is direct. Interacts with RAD51; the interaction is direct. Interacts (via the C-terminal region) with FIGNL1 (via N-terminal one-half region); the interaction is direct.

Its subcellular location is the nucleus. Its function is as follows. Plays a role in DNA double-strand break (DBS) repair via homologous recombination (HR). Serves as a scaffolding protein that helps to promote the recruitment of DNA-processing enzymes like the helicase BLM and recombinase RAD51 to site of DNA damage, and hence contributes to maintain genomic integrity. The chain is DNA repair-scaffolding protein (SPIDR) from Homo sapiens (Human).